The chain runs to 369 residues: 1-aminocyclopropane-1-carboxylate oxidase homolog 2 (369 aa).

In terms of domain architecture, Fe2OG dioxygenase spans 217-318 (KGLRMLCHYF…VSVACFFHTH (102 aa)). H241, D243, and H297 together coordinate Fe cation.

The protein belongs to the iron/ascorbate-dependent oxidoreductase family. It depends on Fe cation as a cofactor.

This Arabidopsis thaliana (Mouse-ear cress) protein is 1-aminocyclopropane-1-carboxylate oxidase homolog 2.